A 444-amino-acid chain; its full sequence is Exodeoxyribonuclease 7 large subunit (444 aa).

The protein belongs to the XseA family. As to quaternary structure, heterooligomer composed of large and small subunits.

The protein resides in the cytoplasm. It carries out the reaction Exonucleolytic cleavage in either 5'- to 3'- or 3'- to 5'-direction to yield nucleoside 5'-phosphates.. Functionally, bidirectionally degrades single-stranded DNA into large acid-insoluble oligonucleotides, which are then degraded further into small acid-soluble oligonucleotides. This chain is Exodeoxyribonuclease 7 large subunit, found in Aliivibrio salmonicida (strain LFI1238) (Vibrio salmonicida (strain LFI1238)).